Reading from the N-terminus, the 490-residue chain is Cytochrome P450 2C9 (490 aa).

Position 435 (Cys-435) interacts with heme.

The protein belongs to the cytochrome P450 family. Heme serves as cofactor.

It localises to the endoplasmic reticulum membrane. The protein localises to the microsome membrane. It catalyses the reaction an organic molecule + reduced [NADPH--hemoprotein reductase] + O2 = an alcohol + oxidized [NADPH--hemoprotein reductase] + H2O + H(+). It carries out the reaction (5Z,8Z,11Z,14Z)-eicosatetraenoate + reduced [NADPH--hemoprotein reductase] + O2 = (8R,9S)-epoxy-(5Z,11Z,14Z)-eicosatrienoate + oxidized [NADPH--hemoprotein reductase] + H2O + H(+). The enzyme catalyses (5Z,8Z,11Z,14Z)-eicosatetraenoate + reduced [NADPH--hemoprotein reductase] + O2 = (8S,9R)-epoxy-(5Z,11Z,14Z)-eicosatrienoate + oxidized [NADPH--hemoprotein reductase] + H2O + H(+). The catalysed reaction is (5Z,8Z,11Z,14Z)-eicosatetraenoate + reduced [NADPH--hemoprotein reductase] + O2 = (11R,12S)-epoxy-(5Z,8Z,14Z)-eicosatrienoate + oxidized [NADPH--hemoprotein reductase] + H2O + H(+). It catalyses the reaction (5Z,8Z,11Z,14Z)-eicosatetraenoate + reduced [NADPH--hemoprotein reductase] + O2 = (11S,12R)-epoxy-(5Z,8Z,14Z)-eicosatrienoate + oxidized [NADPH--hemoprotein reductase] + H2O + H(+). It carries out the reaction (5Z,8Z,11Z,14Z)-eicosatetraenoate + reduced [NADPH--hemoprotein reductase] + O2 = (14R,15S)-epoxy-(5Z,8Z,11Z)-eicosatrienoate + oxidized [NADPH--hemoprotein reductase] + H2O + H(+). The enzyme catalyses (5Z,8Z,11Z,14Z)-eicosatetraenoate + reduced [NADPH--hemoprotein reductase] + O2 = (14S,15R)-epoxy-(5Z,8Z,11Z)-eicosatrienoate + oxidized [NADPH--hemoprotein reductase] + H2O + H(+). The catalysed reaction is (5Z,8Z,11Z,14Z,17Z)-eicosapentaenoate + reduced [NADPH--hemoprotein reductase] + O2 = 8,9-epoxy-(5Z,11Z,14Z,17Z)-eicosatetraenoate + oxidized [NADPH--hemoprotein reductase] + H2O + H(+). It catalyses the reaction (5Z,8Z,11Z,14Z,17Z)-eicosapentaenoate + reduced [NADPH--hemoprotein reductase] + O2 = 11,12-epoxy-(5Z,8Z,14Z,17Z)-eicosatetraenoate + oxidized [NADPH--hemoprotein reductase] + H2O + H(+). It carries out the reaction (5Z,8Z,11Z,14Z,17Z)-eicosapentaenoate + reduced [NADPH--hemoprotein reductase] + O2 = 14,15-epoxy-(5Z,8Z,11Z,17Z)-eicosatetraenoate + oxidized [NADPH--hemoprotein reductase] + H2O + H(+). The enzyme catalyses (5Z,8Z,11Z,14Z,17Z)-eicosapentaenoate + reduced [NADPH--hemoprotein reductase] + O2 = (17R,18S)-epoxy-(5Z,8Z,11Z,14Z)-eicosatetraenoate + oxidized [NADPH--hemoprotein reductase] + H2O + H(+). The catalysed reaction is cholesterol + reduced [NADPH--hemoprotein reductase] + O2 = 25-hydroxycholesterol + oxidized [NADPH--hemoprotein reductase] + H2O + H(+). It catalyses the reaction 17beta-estradiol + reduced [NADPH--hemoprotein reductase] + O2 = 2-hydroxy-17beta-estradiol + oxidized [NADPH--hemoprotein reductase] + H2O + H(+). It carries out the reaction estrone + reduced [NADPH--hemoprotein reductase] + O2 = 2-hydroxyestrone + oxidized [NADPH--hemoprotein reductase] + H2O + H(+). The enzyme catalyses (5Z,8Z,11Z,14Z)-eicosatetraenoate + reduced [NADPH--hemoprotein reductase] + O2 = (11R)-hydroxy-(5Z,8Z,12E,14Z)-eicosatetraenoate + oxidized [NADPH--hemoprotein reductase] + H2O + H(+). The catalysed reaction is (5Z,8Z,11Z,14Z)-eicosatetraenoate + reduced [NADPH--hemoprotein reductase] + O2 = (12R)-hydroxy-(5Z,8Z,10E,14Z)-eicosatetraenoate + oxidized [NADPH--hemoprotein reductase] + H2O + H(+). It catalyses the reaction (5Z,8Z,11Z,14Z)-eicosatetraenoate + reduced [NADPH--hemoprotein reductase] + O2 = (15R)-hydroxy-(5Z,8Z,11Z,13E)-eicosatetraenoate + oxidized [NADPH--hemoprotein reductase] + H2O + H(+). It carries out the reaction (5Z,8Z,11Z,14Z)-eicosatetraenoate + reduced [NADPH--hemoprotein reductase] + O2 = 10-hydroxy-(5Z,8Z,11Z,14Z)-eicosatetraenoate + oxidized [NADPH--hemoprotein reductase] + H2O + H(+). The enzyme catalyses (9Z,12Z)-octadecadienoate + reduced [NADPH--hemoprotein reductase] + O2 = (13R)-hydroxy-(9Z,11E)-octadecadienoate + oxidized [NADPH--hemoprotein reductase] + H2O + H(+). The catalysed reaction is (9Z,12Z)-octadecadienoate + reduced [NADPH--hemoprotein reductase] + O2 = (9R)-hydroxy-(10E,12Z)-octadecadienoate + oxidized [NADPH--hemoprotein reductase] + H2O + H(+). It catalyses the reaction (5Z,8Z,11Z,14Z)-eicosatetraenoate + reduced [NADPH--hemoprotein reductase] + O2 = 19-hydroxy-(5Z,8Z,11Z,14Z)-eicosatetraenoate + oxidized [NADPH--hemoprotein reductase] + H2O + H(+). It carries out the reaction (5Z,8Z,11Z,14Z)-eicosatetraenoate + reduced [NADPH--hemoprotein reductase] + O2 = 13(S)-hydroxy-(5Z,8Z,11Z,14Z)-eicosatetraenoate + oxidized [NADPH--hemoprotein reductase] + H2O + H(+). The enzyme catalyses (5Z,8Z,11Z,14Z)-eicosatetraenoate + reduced [NADPH--hemoprotein reductase] + O2 = 14,15-epoxy-(5Z,8Z,11Z)-eicosatrienoate + oxidized [NADPH--hemoprotein reductase] + H2O + H(+). The catalysed reaction is (5Z,8Z,11Z,14Z)-eicosatetraenoate + reduced [NADPH--hemoprotein reductase] + O2 = 11,12-epoxy-(5Z,8Z,14Z)-eicosatrienoate + oxidized [NADPH--hemoprotein reductase] + H2O + H(+). It catalyses the reaction (5Z,8Z,11Z,14Z)-eicosatetraenoate + reduced [NADPH--hemoprotein reductase] + O2 = 13-hydroxy-(5Z,8Z,11Z,14Z)-eicosatetraenoate + oxidized [NADPH--hemoprotein reductase] + H2O + H(+). It carries out the reaction (4R)-limonene + reduced [NADPH--hemoprotein reductase] + O2 = (1R,5S)-carveol + oxidized [NADPH--hemoprotein reductase] + H2O + H(+). The enzyme catalyses (4S)-limonene + reduced [NADPH--hemoprotein reductase] + O2 = (1S,5R)-carveol + oxidized [NADPH--hemoprotein reductase] + H2O + H(+). The catalysed reaction is (4S)-limonene + reduced [NADPH--hemoprotein reductase] + O2 = (4S)-perillyl alcohol + oxidized [NADPH--hemoprotein reductase] + H2O + H(+). It participates in lipid metabolism; arachidonate metabolism. The protein operates within steroid metabolism; cholesterol metabolism. It functions in the pathway terpene metabolism; (4R)-limonene degradation. Its function is as follows. A cytochrome P450 monooxygenase involved in the metabolism of various endogenous substrates, including fatty acids and steroids. Mechanistically, uses molecular oxygen inserting one oxygen atom into a substrate, and reducing the second into a water molecule, with two electrons provided by NADPH via cytochrome P450 reductase (NADPH--hemoprotein reductase). Catalyzes the epoxidation of double bonds of polyunsaturated fatty acids (PUFA). Catalyzes the hydroxylation of carbon-hydrogen bonds. Metabolizes cholesterol toward 25-hydroxycholesterol, a physiological regulator of cellular cholesterol homeostasis. Exhibits low catalytic activity for the formation of catechol estrogens from 17beta-estradiol (E2) and estrone (E1), namely 2-hydroxy E1 and E2. Catalyzes bisallylic hydroxylation and hydroxylation with double-bond migration of polyunsaturated fatty acids (PUFA). Also metabolizes plant monoterpenes such as limonene. Oxygenates (R)- and (S)-limonene to produce carveol and perillyl alcohol. Contributes to the wide pharmacokinetics variability of the metabolism of drugs such as S-warfarin, diclofenac, phenytoin, tolbutamide and losartan. The sequence is that of Cytochrome P450 2C9 from Homo sapiens (Human).